Consider the following 24-residue polypeptide: Brevinin-1Bb (24 aa).

A disulfide bridge connects residues Cys-18 and Cys-24.

In terms of tissue distribution, expressed by the skin glands.

The protein resides in the secreted. In terms of biological role, antibacterial activity against Gram-positive bacterium S.aureus and Gram-negative bacterium E.coli. Has activity against C.albicans. This is Brevinin-1Bb from Lithobates berlandieri (Rio Grande leopard frog).